Consider the following 28-residue polypeptide: Conotoxin as14b (28 aa).

2 disulfide bridges follow: cysteine 7/cysteine 27 and cysteine 11/cysteine 23.

Belongs to the conotoxin L superfamily. In terms of tissue distribution, expressed by the venom duct.

It is found in the secreted. Its function is as follows. In vivo, intracranial injection elicits scratching and grooming activity in mice, and causes body and rear limb extension and tail curling immediately upon injection. This chain is Conotoxin as14b, found in Conus cancellatus (Cancellate cone).